The following is a 158-amino-acid chain: Respiratory supercomplex factor 1, mitochondrial (158 aa).

In terms of domain architecture, HIG1 spans 5–96 (PSSFDSDADD…TNKNERESHE (92 aa)). Transmembrane regions (helical) follow at residues 32–52 (PLVP…VLNV) and 68–88 (VALQ…YGTN). Residues 88-158 (NKNERESHEE…LKDLEERLKK (71 aa)) adopt a coiled-coil conformation. The segment at 128–158 (AELARQKAKEMEQETSKLQQELKDLEERLKK) is disordered.

Belongs to the RCF1 family. As to quaternary structure, associates with the respiratory chain complex III/complex IV supercomplex.

It localises to the mitochondrion membrane. Its function is as follows. Cytochrome c oxidase subunit which plays a role in assembly of respiratory supercomplexes. The chain is Respiratory supercomplex factor 1, mitochondrial (RCF1) from Kluyveromyces lactis (strain ATCC 8585 / CBS 2359 / DSM 70799 / NBRC 1267 / NRRL Y-1140 / WM37) (Yeast).